The primary structure comprises 390 residues: Probable tRNA pseudouridine synthase D (390 aa).

Aspartate 93 functions as the Nucleophile in the catalytic mechanism. One can recognise a TRUD domain in the interval 166-353 (YVLNYYGIQR…YGTRRKMITP (188 aa)).

The protein belongs to the pseudouridine synthase TruD family.

The catalysed reaction is uridine(13) in tRNA = pseudouridine(13) in tRNA. Could be responsible for synthesis of pseudouridine from uracil-13 in transfer RNAs. The sequence is that of Probable tRNA pseudouridine synthase D from Methanococcus maripaludis (strain C5 / ATCC BAA-1333).